A 710-amino-acid chain; its full sequence is MADMRRRNGSGGSSNHERNEQILFPKPETLDFDLPCDTSFPQQIGDNAASSSGSNVKSLLIEMGFCPTLVQKAIDENGQDDFELLLEILTKSTETEPPGPSFHGLMEPKPEPDIEYETDRIRIALLTMKFPENLVDFALDRLGKDTPIDEMVDFIVAAQLAEKYAEESEDSLDGAEINEEDEDVTPVTARGPEVPNEQLFETMDKTLRLLEMGFSNDEISMAIEKIGTKGQISVLAESIVTGEFPAECHDDLEDIEKKVSAAAPAVNRTCLSKSWRFVGVGAQKEDGGGGSSSGTANIKPDPGIESFPFPATDNVGETSRGKRPKDEDENAYPEEYTGYDDRGKRLRPEDMGDSSSFMETPWMQDEWKDNTYEFPSVMQPRLSQSLGPKVARRPYFFYGQLGELSPSWWSKISGFLFGIHPEHVDTRLCSALRRTEGYLHNLPTVNRFNTLPNPRLTIQDAMPHMRSWWPQWDIRKHFNSGTCSNMKDATLLCERIGRRIAECKGKPTQQDQTLILRHCHTSNLIWIAPNILSPLEPEHLECIMGYPMNHTNIGGGRLAERLKLFDYCFQTDTLGYHLSVLKSMFPQGLTVLSLFSGIGGAEIALDRLGIHLKGVVSVESCGLSRNILKRWWQTSGQTGELVQIEEIKSLTAKRLETLMQRFGGFDFVICQNPSTPLDLSKEISNSEACEFDYTLFNEFARVTKRVRDMM.

The tract at residues 1-21 (MADMRRRNGSGGSSNHERNEQ) is disordered. The UBA 1 domain occupies 52 to 92 (SGSNVKSLLIEMGFCPTLVQKAIDENGQDDFELLLEILTKS). A compositionally biased stretch (acidic residues) spans 167 to 184 (ESEDSLDGAEINEEDEDV). Residues 167 to 192 (ESEDSLDGAEINEEDEDVTPVTARGP) are disordered. Positions 198 to 242 (QLFETMDKTLRLLEMGFSNDEISMAIEKIGTKGQISVLAESIVTG) constitute a UBA 2 domain. A disordered region spans residues 282–360 (AQKEDGGGGS…MGDSSSFMET (79 aa)). A compositionally biased stretch (basic and acidic residues) spans 339 to 350 (YDDRGKRLRPED). One can recognise an SAM-dependent MTase DRM-type domain in the interval 379–710 (QPRLSQSLGP…RVTKRVRDMM (332 aa)).

Belongs to the class I-like SAM-binding methyltransferase superfamily. DRM-methyltransferase family. As to quaternary structure, interacts with Pol V.

It is found in the nucleus. In terms of biological role, catalytically inactive DNA methyltransferase that acts as regulatory factor for DRM2-mediated DNA methylation. Required for maintenance of non-CpG DNA methylation. Required for normal establishment and maintenance of RNA-directed DNA methylation (RdDM) and accumulation of specific repeat-associated small interfering RNAs (siRNAs). Required for nucleolus organizer region (NOR) nuclear organization during interphase. Acts downstream of the production of siRNAs. May promote RNA polymerase V (Pol V) transcriptional elongation or assist in the stabilization of Pol V transcripts. This is Probable inactive DNA (cytosine-5)-methyltransferase DRM3 from Arabidopsis thaliana (Mouse-ear cress).